Consider the following 218-residue polypeptide: Dual specificity protein phosphatase TpbA (218 aa).

The N-terminal stretch at 1–28 is a signal peptide; sequence MHRSPLAWLRLLLAAVLGAFLLGGPLHA. The Tyrosine-protein phosphatase domain occupies 44–188; that stretch reads DPSINLYRMS…YVRGADVDGL (145 aa). Catalysis depends on Asp-105, which acts as the Proton donor/acceptor. Catalysis depends on Cys-132, which acts as the Phosphocysteine intermediate.

This sequence belongs to the protein-tyrosine phosphatase family.

The protein localises to the periplasm. The enzyme catalyses O-phospho-L-tyrosyl-[protein] + H2O = L-tyrosyl-[protein] + phosphate. The catalysed reaction is O-phospho-L-threonyl-[protein] + H2O = L-threonyl-[protein] + phosphate. It carries out the reaction O-phospho-L-seryl-[protein] + H2O = L-seryl-[protein] + phosphate. Phosphatase that regulates diverse phenotypes in P.aeruginosa via regulation of the concentration of cellular c-di-GMP. Acts by dephosphorylating the membrane-anchored diguanylate cyclase TpbB at tyrosine and serine/threonine sites, leading to inactivation of TpbB and reduced c-di-GMP production. In vitro shows phosphatase activity toward p-nitrophenyl phosphate (pNPP) and tyrosine phosphopeptides. Can efficiently dephosphorylate two phosphorylated peptides derived from the periplasmic domain of TpbB, with a strong preference for Tyr-48 over Tyr-62. The chain is Dual specificity protein phosphatase TpbA from Pseudomonas aeruginosa (strain ATCC 15692 / DSM 22644 / CIP 104116 / JCM 14847 / LMG 12228 / 1C / PRS 101 / PAO1).